Here is a 269-residue protein sequence, read N- to C-terminus: Enoyl-[acyl-carrier-protein] reductase [NADH] (269 aa).

NAD(+)-binding positions include 20–21 (SI), 64–65 (DV), and 95–96 (IG). Tyrosine 158 lines the substrate pocket. NAD(+) is bound by residues lysine 165 and isoleucine 194. The residue at position 266 (threonine 266) is a Phosphothreonine.

Belongs to the short-chain dehydrogenases/reductases (SDR) family. FabI subfamily. In terms of assembly, homodimer. Homotetramer. In terms of processing, is phosphorylated in vivo. Phosphorylation on Thr-266 decreases enzymatic activity.

The protein resides in the secreted. It localises to the cell wall. It carries out the reaction a 2,3-saturated acyl-[ACP] + NAD(+) = a (2E)-enoyl-[ACP] + NADH + H(+). It catalyses the reaction a 2,3-saturated acyl-CoA + NAD(+) = a (2E)-enoyl-CoA + NADH + H(+). The enzyme catalyses (2E)-octenoyl-CoA + NADH + H(+) = octanoyl-CoA + NAD(+). The catalysed reaction is (2E)-dodecenoyl-CoA + NADH + H(+) = dodecanoyl-CoA + NAD(+). It participates in lipid metabolism; mycolic acid biosynthesis. Its activity is regulated as follows. InhA activity is controlled via phosphorylation: phosphorylation on Thr-266 decreases InhA activity and likely negatively regulates biosynthesis of mycolic acids and growth of the bacterium. InhA activity is likely inhibited by activated isoniazid, hexadecynoyl-CoA and octadecynoyl-CoA, which also block the biosynthesis of mycolic acids. The antitubercular pro-drug isoniazid (INH) is oxidatively activated by the catalase-peroxidase KatG and then covalently binds NAD to form an adduct that inhibits the activity of InhA. The inhibitory adduct is the isonicotinic-acyl-NADH where the isonicotinic-acyl group replaces the 4S (and not the 4R) hydrogen of NADH. Similarly, the antitubercular pro-drugs ethionamide (ETH) and prothionamide (PTH) are activated by the flavoprotein monooxygenase EthA, and forms an adduct with NAD (ETH-NAD and PTH-NAD, respectively) that is a tight-binding inhibitor of InhA. Its function is as follows. Enoyl-ACP reductase of the type II fatty acid syntase (FAS-II) system, which is involved in the biosynthesis of mycolic acids, a major component of mycobacterial cell walls. Catalyzes the NADH-dependent reduction of the double bond of 2-trans-enoyl-[acyl-carrier protein], an essential step in the fatty acid elongation cycle of the FAS-II pathway. Shows preference for long-chain fatty acyl thioester substrates (&gt;C16), and can also use 2-trans-enoyl-CoAs as alternative substrates. The mycobacterial FAS-II system utilizes the products of the FAS-I system as primers to extend fatty acyl chain lengths up to C56, forming the meromycolate chain that serves as the precursor for final mycolic acids. Is the primary target of the first-line antitubercular drug isoniazid (INH) and of the second-line drug ethionamide (ETH). Overexpressed inhA confers INH and ETH resistance to M.smegmatis. The mechanism of isoniazid action against InhA is covalent attachment of the activated form of the drug to the nicotinamide ring of NAD and binding of the INH-NAD adduct to the active site of InhA. Similarly, the ETH-NAD adduct binds InhA. This Mycolicibacterium smegmatis (strain ATCC 700084 / mc(2)155) (Mycobacterium smegmatis) protein is Enoyl-[acyl-carrier-protein] reductase [NADH].